We begin with the raw amino-acid sequence, 209 residues long: Dof zinc finger protein DOF1.6 (209 aa).

The segment covering 1–17 (MPSEPNQTRPTRVQPST) has biased composition (polar residues). The interval 1 to 29 (MPSEPNQTRPTRVQPSTAAYPPPNLAEPL) is disordered. Residues 20-29 (YPPPNLAEPL) show a composition bias toward pro residues. The Dof-type zinc-finger motif lies at 29-83 (LPCPRCNSTTTKFCYYNNYNLAQPRYYCKSCRRYWTQGGTLRDVPVGGGTRRSSS). The Zn(2+) site is built by C31, C34, C56, and C59. Residues 70 to 116 (RDVPVGGGTRRSSSKRHRSFSTTATSSSSSSSVITTTTQEPATTEAS) form a disordered region. The segment covering 89–116 (FSTTATSSSSSSSVITTTTQEPATTEAS) has biased composition (low complexity).

The protein localises to the nucleus. In terms of biological role, transcription factor that binds specifically to a 5'-AA[AG]G-3' consensus core sequence. The protein is Dof zinc finger protein DOF1.6 (DOF1.6) of Arabidopsis thaliana (Mouse-ear cress).